We begin with the raw amino-acid sequence, 154 residues long: Myoglobin (154 aa).

Residues 2 to 148 form the Globin domain; it reads GLSDGEWQLV…FRNDMAAQYK (147 aa). Ser-4 is modified (phosphoserine). His-65 provides a ligand contact to nitrite. Residue His-65 participates in O2 binding. Position 68 is a phosphothreonine (Thr-68). His-94 lines the heme b pocket.

Belongs to the globin family. Monomeric.

The protein resides in the cytoplasm. Its subcellular location is the sarcoplasm. It carries out the reaction Fe(III)-heme b-[protein] + nitric oxide + H2O = Fe(II)-heme b-[protein] + nitrite + 2 H(+). It catalyses the reaction H2O2 + AH2 = A + 2 H2O. Functionally, monomeric heme protein which primary function is to store oxygen and facilitate its diffusion within muscle tissues. Reversibly binds oxygen through a pentacoordinated heme iron and enables its timely and efficient release as needed during periods of heightened demand. Depending on the oxidative conditions of tissues and cells, and in addition to its ability to bind oxygen, it also has a nitrite reductase activity whereby it regulates the production of bioactive nitric oxide. Under stress conditions, like hypoxia and anoxia, it also protects cells against reactive oxygen species thanks to its pseudoperoxidase activity. The sequence is that of Myoglobin (MB) from Cervus elaphus (Red deer).